We begin with the raw amino-acid sequence, 378 residues long: Chaperone protein DnaJ (378 aa).

The region spanning 5-70 (DFYEVLGLSK…QKRAAYDQYG (66 aa)) is the J domain. The CR-type zinc-finger motif lies at 133-211 (GITKEIRIPT…CHGDGRVERY (79 aa)). Zn(2+) is bound by residues Cys146, Cys149, Cys163, Cys166, Cys185, Cys188, Cys199, and Cys202. 4 CXXCXGXG motif repeats span residues 146–153 (CDKCHGSG), 163–170 (CSTCHGAG), 185–192 (CPTCHGRG), and 199–206 (CSKCHGDG).

This sequence belongs to the DnaJ family. As to quaternary structure, homodimer. The cofactor is Zn(2+).

It is found in the cytoplasm. Functionally, participates actively in the response to hyperosmotic and heat shock by preventing the aggregation of stress-denatured proteins and by disaggregating proteins, also in an autonomous, DnaK-independent fashion. Unfolded proteins bind initially to DnaJ; upon interaction with the DnaJ-bound protein, DnaK hydrolyzes its bound ATP, resulting in the formation of a stable complex. GrpE releases ADP from DnaK; ATP binding to DnaK triggers the release of the substrate protein, thus completing the reaction cycle. Several rounds of ATP-dependent interactions between DnaJ, DnaK and GrpE are required for fully efficient folding. Also involved, together with DnaK and GrpE, in the DNA replication of plasmids through activation of initiation proteins. The protein is Chaperone protein DnaJ of Proteus mirabilis (strain HI4320).